The chain runs to 179 residues: Ribosome maturation factor RimM (179 aa).

The PRC barrel domain occupies 101-179; the sequence is EGEVYVHDLC…VELMHRWILE (79 aa).

The protein belongs to the RimM family. In terms of assembly, binds ribosomal protein uS19.

Its subcellular location is the cytoplasm. An accessory protein needed during the final step in the assembly of 30S ribosomal subunit, possibly for assembly of the head region. Essential for efficient processing of 16S rRNA. May be needed both before and after RbfA during the maturation of 16S rRNA. It has affinity for free ribosomal 30S subunits but not for 70S ribosomes. The polypeptide is Ribosome maturation factor RimM (Treponema denticola (strain ATCC 35405 / DSM 14222 / CIP 103919 / JCM 8153 / KCTC 15104)).